Here is a 316-residue protein sequence, read N- to C-terminus: UDP-N-acetylenolpyruvoylglucosamine reductase (316 aa).

Residues 27-225 (VGGKAERFYR…KTAINALLKK (199 aa)) form the FAD-binding PCMH-type domain. Residue Arg-190 is part of the active site. Ser-239 acts as the Proton donor in catalysis. Residue Glu-309 is part of the active site.

Belongs to the MurB family. FAD serves as cofactor.

The protein localises to the cytoplasm. It carries out the reaction UDP-N-acetyl-alpha-D-muramate + NADP(+) = UDP-N-acetyl-3-O-(1-carboxyvinyl)-alpha-D-glucosamine + NADPH + H(+). It participates in cell wall biogenesis; peptidoglycan biosynthesis. Functionally, cell wall formation. This is UDP-N-acetylenolpyruvoylglucosamine reductase from Coxiella burnetii (strain CbuK_Q154) (Coxiella burnetii (strain Q154)).